The primary structure comprises 185 residues: Elongation factor P (185 aa).

Belongs to the elongation factor P family.

The protein resides in the cytoplasm. Its pathway is protein biosynthesis; polypeptide chain elongation. Functionally, involved in peptide bond synthesis. Stimulates efficient translation and peptide-bond synthesis on native or reconstituted 70S ribosomes in vitro. Probably functions indirectly by altering the affinity of the ribosome for aminoacyl-tRNA, thus increasing their reactivity as acceptors for peptidyl transferase. The polypeptide is Elongation factor P (Desulfitobacterium hafniense (strain DSM 10664 / DCB-2)).